The chain runs to 246 residues: NAD-dependent protein deacetylase (246 aa).

One can recognise a Deacetylase sirtuin-type domain in the interval 1-246; sequence MKKPDIQQLK…VIEEIVNSNS (246 aa). NAD(+) is bound by residues Ala25, Phe36, Arg37, Gln106, Ile108, Asp109, and His124. Nicotinamide is bound at residue Phe36. Ile108 and Asp109 together coordinate nicotinamide. His124 functions as the Proton acceptor in the catalytic mechanism. 4 residues coordinate Zn(2+): Cys132, Cys135, Cys152, and Cys155. Ser193, Ser194, Asn216, and Asp233 together coordinate NAD(+).

Belongs to the sirtuin family. Class U subfamily. Zn(2+) serves as cofactor.

Its subcellular location is the cytoplasm. The enzyme catalyses N(6)-acetyl-L-lysyl-[protein] + NAD(+) + H2O = 2''-O-acetyl-ADP-D-ribose + nicotinamide + L-lysyl-[protein]. In terms of biological role, NAD-dependent protein deacetylase which modulates the activities of several enzymes which are inactive in their acetylated form. The sequence is that of NAD-dependent protein deacetylase from Staphylococcus epidermidis (strain ATCC 12228 / FDA PCI 1200).